The primary structure comprises 735 residues: Muskelin (735 aa).

A2 carries the post-translational modification N-acetylalanine. One can recognise a LisH domain in the interval 172-204; that stretch reads REQEAIRLCLKHFRQHNYTEAFESLQKKTKIAL. Residues 206–258 enclose the CTLH domain; sequence HPMLTDIHDKLVLKGDFDACEELIEKAVNDGLFNQYISQQEYKPRWSQIIPKS. 6 Kelch repeats span residues 284–330, 339–391, 408–458, 469–515, 526–578, and 597–651; these read TVYL…SCHK, QIYT…FDHQ, ILTC…SRIG, CLYV…TGFT, EIHV…SLQE, and VHYL…AQMD.

In terms of assembly, homodimer; may form higher oligomers. Identified in the CTLH complex that contains GID4, RANBP9 and/or RANBP10, MKLN1, MAEA, RMND5A (or alternatively its paralog RMND5B), GID8, ARMC8, WDR26 and YPEL5. Within this complex, MAEA, RMND5A (or alternatively its paralog RMND5B), GID8, WDR26, and RANBP9 and/or RANBP10 form the catalytic core, while GID4, MKLN1, ARMC8 and YPEL5 have ancillary roles. Interacts with RANBP9. Part of a complex consisting of RANBP9, MKLN1 and GID8. Interacts with GABRA1. Interacts with the C-terminal tail of PTGER3.

The protein resides in the cytoplasm. Its subcellular location is the cytosol. The protein localises to the nucleus. It is found in the nucleoplasm. It localises to the cell projection. The protein resides in the ruffle. Its subcellular location is the cell cortex. The protein localises to the synapse. It is found in the postsynapse. Functionally, component of the CTLH E3 ubiquitin-protein ligase complex that selectively accepts ubiquitin from UBE2H and mediates ubiquitination and subsequent proteasomal degradation of the transcription factor HBP1. Required for internalization of the GABA receptor GABRA1 from the cell membrane via endosomes and subsequent GABRA1 degradation. Acts as a mediator of cell spreading and cytoskeletal responses to the extracellular matrix component THBS1. The sequence is that of Muskelin (MKLN1) from Pongo abelii (Sumatran orangutan).